Consider the following 314-residue polypeptide: Putative S-adenosyl-L-methionine-dependent methyltransferase MRA_3805 (314 aa).

S-adenosyl-L-methionine contacts are provided by residues D132 and 161 to 162; that span reads DL.

The protein belongs to the UPF0677 family.

Functionally, exhibits S-adenosyl-L-methionine-dependent methyltransferase activity. This is Putative S-adenosyl-L-methionine-dependent methyltransferase MRA_3805 from Mycobacterium tuberculosis (strain ATCC 25177 / H37Ra).